A 254-amino-acid polypeptide reads, in one-letter code: UPF0246 protein FTN_1542 (254 aa).

It belongs to the UPF0246 family.

In Francisella tularensis subsp. novicida (strain U112), this protein is UPF0246 protein FTN_1542.